The sequence spans 246 residues: Small ribosomal subunit protein uS2 (246 aa).

The protein belongs to the universal ribosomal protein uS2 family.

The sequence is that of Small ribosomal subunit protein uS2 from Saccharophagus degradans (strain 2-40 / ATCC 43961 / DSM 17024).